The following is a 110-amino-acid chain: Inner kinetochore subunit mhf1 (110 aa).

The protein belongs to the TAF9 family. CENP-S/MHF1 subfamily. The MHF histone-fold complex is a heterotetramer of 2 mhf1-mhf2 heterodimers. Component of the inner kinetochore constitutive centromere-associated network (CCAN) (also known as central kinetochore Sim4 complex in fission yeast), which is composed of at least cnl2, cnp3, cnp20, fta1, fta2, fta3, fta4, fta6, fta7, mal2, mhf1, mhf2, mis6, mis15, mis17, sim4 and wip1.

It is found in the nucleus. Functionally, component of a FANCM-MHF complex that promotes gene conversion at blocked replication forks, probably by reversal of the stalled fork. FANCM-MHF promotes non-crossover recombination. The sequence is that of Inner kinetochore subunit mhf1 from Schizosaccharomyces pombe (strain 972 / ATCC 24843) (Fission yeast).